A 252-amino-acid polypeptide reads, in one-letter code: 3-dehydroquinate dehydratase (252 aa).

3-dehydroquinate-binding positions include Ser21, 46–48 (EWR), and Arg82. The Proton donor/acceptor role is filled by His143. The Schiff-base intermediate with substrate role is filled by Lys170. The 3-dehydroquinate site is built by Arg213, Ser232, and Gln236.

It belongs to the type-I 3-dehydroquinase family. As to quaternary structure, homodimer.

It catalyses the reaction 3-dehydroquinate = 3-dehydroshikimate + H2O. Its pathway is metabolic intermediate biosynthesis; chorismate biosynthesis; chorismate from D-erythrose 4-phosphate and phosphoenolpyruvate: step 3/7. Involved in the third step of the chorismate pathway, which leads to the biosynthesis of aromatic amino acids. Catalyzes the cis-dehydration of 3-dehydroquinate (DHQ) and introduces the first double bond of the aromatic ring to yield 3-dehydroshikimate. The sequence is that of 3-dehydroquinate dehydratase from Salmonella choleraesuis (strain SC-B67).